We begin with the raw amino-acid sequence, 353 residues long: Lactosylceramide 4-alpha-galactosyltransferase (353 aa).

Over 1–22 (MSKPPDLLLRLLRGAPRQRVCT) the chain is Cytoplasmic. A helical; Signal-anchor for type II membrane protein membrane pass occupies residues 23 to 43 (LFIIGFKFTFFVSIMIYWHVV). The Lumenal segment spans residues 44 to 353 (GEPKEKGQLY…TTHEAMKMYL (310 aa)). Asn121 carries an N-linked (GlcNAc...) asparagine glycan. The short motif at 192–194 (DTD) is the DXD motif element. A glycan (N-linked (GlcNAc...) asparagine) is linked at Asn203.

This sequence belongs to the glycosyltransferase 32 family. Ubiquitous. Highly expressed in kidney, heart, spleen, liver, testis and placenta.

Its subcellular location is the golgi apparatus membrane. The enzyme catalyses a beta-D-Gal-(1-&gt;4)-beta-D-Glc-(1&lt;-&gt;1)-Cer(d18:1(4E)) + UDP-alpha-D-galactose = a globoside Gb3Cer (d18:1(4E)) + UDP + H(+). It carries out the reaction a beta-D-Gal-(1&lt;-&gt;1')-ceramide + UDP-alpha-D-galactose = alpha-D-Gal-(1-&gt;4)-beta-D-Gal-(1&lt;-&gt;1')-Cer + UDP + H(+). It participates in glycolipid biosynthesis. Catalyzes the transfer of galactose from UDP-alpha-D-galactose to lactosylceramide/beta-D-galactosyl-(1-&gt;4)-beta-D-glucosyl-(1&lt;-&gt;1)-ceramide(d18:1(4E)) to produce globotriaosylceramide/globoside Gb3Cer (d18:1(4E)). Also able to transfer galactose to galactosylceramide/beta-D-Gal-(1&lt;-&gt;1')-Cer. Globoside Gb3Cer is a glycosphingolipid of the globo serie, one of the major types of neutral root structures of glycosphingolipids, that constitute a significant portion of mammalian cell membranes. Globotriaosylceramide/globoside Gb3Cer in blood and tissue cell membranes is the antigen Pk of blood histogroup P. Its function is as follows. (Microbial infection) Globotriaosylceramide is one of the cellular ligands for bacterial verotoxins. This chain is Lactosylceramide 4-alpha-galactosyltransferase (A4GALT), found in Homo sapiens (Human).